A 279-amino-acid polypeptide reads, in one-letter code: MNLFFLFIIPTILAVKPFRSFNNISLIDNGNVESVRAVVIDYCDIRHPNNLCKKHFEIDSYWNDDTDCFTNIGCKVYGGFDIIGGHTPKVGTVCRLKKGENKFGYCNSKGNCVERDFKESFGISIKIKGISNKGDDEPACPQYKNTWINYGKCNEPYYCGTNHGLFYANKRKLDYFPTDGEKCNSNNIPYAVCYLGRCHTTGGFFSEFGTIVKNVEIVTLSDGKNSSRRGKHKNLPTSKVFDSYSIYDIDPKNWKIEDDDKDVTVHENTLDPKSDSRLC.

Residues 1–14 form the signal peptide; that stretch reads MNLFFLFIIPTILA. The propeptide occupies 15-27; it reads VKPFRSFNNISLI.

In terms of processing, contains several disulfide bonds. In terms of tissue distribution, posterior glands which appear to be connected with the stylet through a series of ducts.

It is found in the secreted. Part of a complex mixture of neurotoxins which P.tritici utilizes to capture prey. It has contracting-paralyzing activity in insects. The protein is Toxin TxP-I of Pyemotes tritici (Straw itch mite).